The chain runs to 1819 residues: Non-reducing polyketide synthase nscA (1819 aa).

An N-terminal acylcarrier protein transacylase domain (SAT) region spans residues 25–277; sequence RRLDQHSKDR…PLPVYDGLCH (253 aa). The 434-residue stretch at 413-846 folds into the Ketosynthase family 3 (KS3) domain; it reads SSKLAIVGMA…GGNTTLLLED (434 aa). Active-site for beta-ketoacyl synthase activity residues include cysteine 586, histidine 721, and histidine 764. The interval 952-1249 is malonyl-CoA:ACP transacylase (MAT) domain; the sequence is FTSQGAYYHG…MIPSAPAMSS (298 aa). The product template (PT) domain stretch occupies residues 1339-1658; that stretch reads TSLVHQITAE…RLLMDRFFSP (320 aa). The N-terminal hotdog fold stretch occupies residues 1343-1479; sequence HQITAETVEA…AMIRFEDPMA (137 aa). Positions 1343–1653 constitute a PKS/mFAS DH domain; that stretch reads HQITAETVEA…IRRVPRLLMD (311 aa). The active-site Proton acceptor; for dehydratase activity is the histidine 1375. A C-terminal hotdog fold region spans residues 1507-1653; sequence ASRLSKPLAY…IRRVPRLLMD (147 aa). Aspartate 1564 serves as the catalytic Proton donor; for dehydratase activity. Residues 1703-1742 form a disordered region; it reads SSTMASKAPEPAPLLATSSESSTPKESPIVTPAESEREDP. A compositionally biased stretch (low complexity) spans 1719–1730; it reads TSSESSTPKESP. The 78-residue stretch at 1742–1819 folds into the Carrier domain; it reads PVDNNMISQC…EMTAWIEEYC (78 aa). An O-(pantetheine 4'-phosphoryl)serine modification is found at serine 1779.

The cofactor is pantetheine 4'-phosphate.

It participates in secondary metabolite biosynthesis. Its function is as follows. Non-reducing polyketide synthase; part of the gene cluster that mediates the biosynthesis of neosartoricin B, a prenylated anthracenone that probably exhibits T-cell antiproliferative activity, suggestive of a physiological role as an immunosuppressive agent. The non-reducing polyketide synthase nscA probably synthesizes and cyclizes the decaketide backbone. The hydrolase nscB then mediates the product release through hydrolysis followed by spontaneous decarboxylation. The prenyltransferase nscD catalyzes the addition of the dimethylallyl group to the aromatic C5. The FAD-dependent monooxygenase nscC is then responsible for the stereospecific hydroxylation at C2. Neosartoricin B can be converted into two additional compounds neosartoricins C and D. Neosartoricin C is a spirocyclic compound that is cyclized through the attack of C3 hydroxyl on C14, followed by dehydration. On the other hand, neosartoricin D is a further cyclized compound in which attack of C2 on C14 in neosartoricin C results in the formation of the acetal-containing dioxabicyclo-octanone ring. Both of these compounds are novel and possibly represent related metabolites of the gene cluster. This Trichophyton verrucosum (strain HKI 0517) protein is Non-reducing polyketide synthase nscA.